The sequence spans 624 residues: Glucoamylase (624 aa).

The N-terminal stretch at 1 to 18 (MRQFLALAAAASIAVADS) is a signal peptide. The 107-residue stretch at 26–132 (NSPPDDKAVA…NSQQLNVQVE (107 aa)) folds into the CBM21 domain. Residues asparagine 54, asparagine 70, asparagine 98, asparagine 111, asparagine 168, asparagine 267, and asparagine 333 are each glycosylated (N-linked (GlcNAc...) asparagine). Aspartate 340 (proton acceptor) is an active-site residue. Glutamate 343 serves as the catalytic Proton donor. Residues asparagine 460 and asparagine 582 are each glycosylated (N-linked (GlcNAc...) asparagine).

This sequence belongs to the glycosyl hydrolase 15 family.

The enzyme catalyses Hydrolysis of terminal (1-&gt;4)-linked alpha-D-glucose residues successively from non-reducing ends of the chains with release of beta-D-glucose.. This Blastobotrys adeninivorans (Yeast) protein is Glucoamylase (GAA).